Here is an 88-residue protein sequence, read N- to C-terminus: Small ribosomal subunit protein uS15c (88 aa).

This sequence belongs to the universal ribosomal protein uS15 family. In terms of assembly, part of the 30S ribosomal subunit.

It localises to the plastid. The protein localises to the chloroplast. The chain is Small ribosomal subunit protein uS15c (rps15) from Angiopteris evecta (Mule's foot fern).